The chain runs to 116 residues: Prefoldin subunit beta (116 aa).

It belongs to the prefoldin subunit beta family. In terms of assembly, heterohexamer of two alpha and four beta subunits.

It localises to the cytoplasm. Functionally, molecular chaperone capable of stabilizing a range of proteins. Seems to fulfill an ATP-independent, HSP70-like function in archaeal de novo protein folding. In Thermococcus onnurineus (strain NA1), this protein is Prefoldin subunit beta.